Here is a 488-residue protein sequence, read N- to C-terminus: Phenylalanine--tRNA ligase alpha subunit (488 aa).

Residues T315, 354-356 (QLD), F394, and F419 contribute to the L-phenylalanine site.

It belongs to the class-II aminoacyl-tRNA synthetase family. Phe-tRNA synthetase alpha subunit type 2 subfamily. As to quaternary structure, tetramer of two alpha and two beta subunits. It depends on Mg(2+) as a cofactor.

It localises to the cytoplasm. It carries out the reaction tRNA(Phe) + L-phenylalanine + ATP = L-phenylalanyl-tRNA(Phe) + AMP + diphosphate + H(+). The sequence is that of Phenylalanine--tRNA ligase alpha subunit from Pyrobaculum calidifontis (strain DSM 21063 / JCM 11548 / VA1).